The following is an 88-amino-acid chain: Small ribosomal subunit protein uS15 (88 aa).

It belongs to the universal ribosomal protein uS15 family. In terms of assembly, part of the 30S ribosomal subunit. Forms a bridge to the 50S subunit in the 70S ribosome, contacting the 23S rRNA.

Functionally, one of the primary rRNA binding proteins, it binds directly to 16S rRNA where it helps nucleate assembly of the platform of the 30S subunit by binding and bridging several RNA helices of the 16S rRNA. Its function is as follows. Forms an intersubunit bridge (bridge B4) with the 23S rRNA of the 50S subunit in the ribosome. In Borreliella burgdorferi (strain ATCC 35210 / DSM 4680 / CIP 102532 / B31) (Borrelia burgdorferi), this protein is Small ribosomal subunit protein uS15.